Consider the following 524-residue polypeptide: Importin subunit alpha-1 (524 aa).

The segment at 1 to 42 (MGDEFRPSHEERSKMYKSNVRDQNEMRRKRREDEVQIRKNRR) is disordered. An IBB domain is found at 1–59 (MGDEFRPSHEERSKMYKSNVRDQNEMRRKRREDEVQIRKNRRDEKFERNRQITVQRSLS).

The protein belongs to the importin alpha family. As to quaternary structure, forms a complex with an importin beta subunit. In terms of tissue distribution, adult germline tissues.

It localises to the cytoplasm. Binds specifically and directly to substrates containing either a simple or bipartite NLS motif. Promotes docking of import substrates to the nuclear envelope. Seems to act as a cytosolic receptor for both simple and bipartite NLS motifs. The sequence is that of Importin subunit alpha-1 (ima-1) from Caenorhabditis elegans.